Consider the following 657-residue polypeptide: UvrABC system protein B (657 aa).

The Helicase ATP-binding domain occupies 25-182; that stretch reads NSIKSNNRAQ…KKLIEIQYER (158 aa). 38-45 is an ATP binding site; that stretch reads GVTGSGKT. Residues 91 to 114 carry the Beta-hairpin motif; that stretch reads YYDYYQPEAYVPQTDTFIEKDASI. One can recognise a Helicase C-terminal domain in the interval 429-595; sequence QIDDLYGEIN…TIIKDVRDII (167 aa). Residues 621 to 656 form the UVR domain; sequence DKLIKDLTEEMLLAAKNLQFERAAELRDIINEIKDG.

The protein belongs to the UvrB family. As to quaternary structure, forms a heterotetramer with UvrA during the search for lesions. Interacts with UvrC in an incision complex.

The protein localises to the cytoplasm. In terms of biological role, the UvrABC repair system catalyzes the recognition and processing of DNA lesions. A damage recognition complex composed of 2 UvrA and 2 UvrB subunits scans DNA for abnormalities. Upon binding of the UvrA(2)B(2) complex to a putative damaged site, the DNA wraps around one UvrB monomer. DNA wrap is dependent on ATP binding by UvrB and probably causes local melting of the DNA helix, facilitating insertion of UvrB beta-hairpin between the DNA strands. Then UvrB probes one DNA strand for the presence of a lesion. If a lesion is found the UvrA subunits dissociate and the UvrB-DNA preincision complex is formed. This complex is subsequently bound by UvrC and the second UvrB is released. If no lesion is found, the DNA wraps around the other UvrB subunit that will check the other stand for damage. The protein is UvrABC system protein B of Clostridium beijerinckii (strain ATCC 51743 / NCIMB 8052) (Clostridium acetobutylicum).